Reading from the N-terminus, the 167-residue chain is UPF0179 protein PAE0681 (167 aa).

Residues 142–167 (PSPSGSSISATSQGPSRAPPSRRLLK) form a disordered region. Positions 145–157 (SGSSISATSQGPS) are enriched in low complexity.

Belongs to the UPF0179 family.

In Pyrobaculum aerophilum (strain ATCC 51768 / DSM 7523 / JCM 9630 / CIP 104966 / NBRC 100827 / IM2), this protein is UPF0179 protein PAE0681.